Consider the following 475-residue polypeptide: Bifunctional aspartate aminotransferase and glutamate/aspartate-prephenate aminotransferase (475 aa).

The transit peptide at M1–M55 directs the protein to the chloroplast. L-aspartate contacts are provided by G107, W193, and N243. K306 is modified (N6-(pyridoxal phosphate)lysine). L-aspartate is bound at residue R445.

This sequence belongs to the class-I pyridoxal-phosphate-dependent aminotransferase family. As to quaternary structure, homodimer. Pyridoxal 5'-phosphate is required as a cofactor.

The protein localises to the plastid. It is found in the chloroplast. It carries out the reaction L-aspartate + 2-oxoglutarate = oxaloacetate + L-glutamate. The enzyme catalyses L-arogenate + oxaloacetate = prephenate + L-aspartate. The catalysed reaction is L-arogenate + 2-oxoglutarate = prephenate + L-glutamate. It functions in the pathway amino-acid biosynthesis; L-phenylalanine biosynthesis; L-arogenate from prephenate (L-Asp route): step 1/1. It participates in amino-acid biosynthesis; L-phenylalanine biosynthesis; L-arogenate from prephenate (L-Glu route): step 1/1. In terms of biological role, prokaryotic-type aspartate aminotransferase. Also has a prenate transaminase activity. Involved in the aromatic amino acids biosynthesis pathway via the arogenate route. Required for the transamination of prephenate into arogenate. Required for early development of the embryo. The chain is Bifunctional aspartate aminotransferase and glutamate/aspartate-prephenate aminotransferase (PAT) from Arabidopsis thaliana (Mouse-ear cress).